We begin with the raw amino-acid sequence, 20 residues long: DELTA-actitoxin-Afr1b (20 aa).

This sequence belongs to the actinoporin family. Sea anemone subfamily. As to quaternary structure, octamer or nonamer in membranes. Monomer in the soluble state.

It is found in the secreted. The protein resides in the nematocyst. It localises to the target cell membrane. Pore-forming toxin (PFT) that consists of a crown-shaped octamer or nonamer that forms cation-selective hydrophilic pores of about 1.5 nm (inside) and 13 nm (outside) and causes cytolysis. It causes cardiac stimulation. Also causes hemolysis (HC(50)=0.4 nM). Interestingly, the Phe-16 is crucial for hemolysis. Pore formation is a multi-step process that involves specific recognition of membrane sphingomyelin (but neither cholesterol nor phosphatidylcholine) using aromatic rich region and adjacent phosphocholine (POC) binding site, firm binding to the membrane (mainly driven by hydrophobic interactions) accompanied by the transfer of the N-terminal region to the lipid-water interface and finally pore formation after oligomerization of monomers. It is probable that a dimeric form is an assembly intermediate before the complete oligomerization. The formation of stable pores occurs only in vesicles composed of DOPC/SM (there is no oligomerization when the PFT is treated with vesicles of DOPC or SM alone). The transmembrane pore displays 8 lateral perforations, one at each subunit-subunit interface, partially occupied by the acyl-chain region of a bridging lipid. Each pore contains 24 lipid molecules, firmly bound to each subunit, that is, 3 lipids (L1, L2, L3, L4 and/or L5) are associated to each subunit. Lipid L1 bridges 2 subunits, whereas lipids L2 and L3 bind to sites at single subunit. This chain is DELTA-actitoxin-Afr1b, found in Actinia fragacea (Strawberry anemone).